The chain runs to 335 residues: Nucleotide-binding protein CYA_0911 (335 aa).

ATP is bound at residue 20-27 (GLTGSGKT). The interval 306–335 (ARFGPPPPAAGVEQQQVRIPLAGVPAPPHD) is disordered.

Belongs to the RapZ-like family.

Its function is as follows. Displays ATPase and GTPase activities. The chain is Nucleotide-binding protein CYA_0911 from Synechococcus sp. (strain JA-3-3Ab) (Cyanobacteria bacterium Yellowstone A-Prime).